Consider the following 177-residue polypeptide: NADH-quinone oxidoreductase subunit B (177 aa).

[4Fe-4S] cluster-binding residues include cysteine 56, cysteine 57, cysteine 121, and cysteine 151.

Belongs to the complex I 20 kDa subunit family. As to quaternary structure, NDH-1 is composed of 14 different subunits. Subunits NuoB, C, D, E, F, and G constitute the peripheral sector of the complex. It depends on [4Fe-4S] cluster as a cofactor.

It is found in the cell inner membrane. The enzyme catalyses a quinone + NADH + 5 H(+)(in) = a quinol + NAD(+) + 4 H(+)(out). Functionally, NDH-1 shuttles electrons from NADH, via FMN and iron-sulfur (Fe-S) centers, to quinones in the respiratory chain. Couples the redox reaction to proton translocation (for every two electrons transferred, four hydrogen ions are translocated across the cytoplasmic membrane), and thus conserves the redox energy in a proton gradient. In Dinoroseobacter shibae (strain DSM 16493 / NCIMB 14021 / DFL 12), this protein is NADH-quinone oxidoreductase subunit B.